Reading from the N-terminus, the 364-residue chain is tRNA-specific 2-thiouridylase MnmA 1 (364 aa).

ATP-binding positions include 11–18 and Phe37; that span reads GMSGGTDS. Cys96 acts as the Nucleophile in catalysis. A disulfide bridge connects residues Cys96 and Cys193. ATP is bound at residue Gly120. The interaction with tRNA stretch occupies residues 142–144; it reads KDQ. Cys193 functions as the Cysteine persulfide intermediate in the catalytic mechanism. The interaction with tRNA stretch occupies residues 309–310; the sequence is RY.

This sequence belongs to the MnmA/TRMU family.

It is found in the cytoplasm. The enzyme catalyses S-sulfanyl-L-cysteinyl-[protein] + uridine(34) in tRNA + AH2 + ATP = 2-thiouridine(34) in tRNA + L-cysteinyl-[protein] + A + AMP + diphosphate + H(+). Its function is as follows. Catalyzes the 2-thiolation of uridine at the wobble position (U34) of tRNA, leading to the formation of s(2)U34. The chain is tRNA-specific 2-thiouridylase MnmA 1 from Bacteroides fragilis (strain ATCC 25285 / DSM 2151 / CCUG 4856 / JCM 11019 / LMG 10263 / NCTC 9343 / Onslow / VPI 2553 / EN-2).